A 134-amino-acid polypeptide reads, in one-letter code: Isocitrate dehydrogenase [NAD] subunit alpha, mitochondrial (134 aa).

Residue lysine 37 is modified to N6-succinyllysine. At threonine 50 the chain carries Phosphothreonine. Substrate is bound by residues arginine 64, arginine 74, and arginine 95.

Belongs to the isocitrate and isopropylmalate dehydrogenases family. As to quaternary structure, heterooligomer of subunits alpha (IDH3A), beta (IDH3B), and gamma (IDH3G) in the apparent ratio of 2:1:1. The heterodimer containing one IDH3A and one IDH3B subunit and the heterodimer containing one IDH3A and one IDH3G subunit assemble into a heterotetramer (which contains two subunits of IDH3A, one of IDH3B and one of IDH3G) and further into the heterooctamer. It depends on Mg(2+) as a cofactor. Requires Mn(2+) as cofactor.

It is found in the mitochondrion. The catalysed reaction is D-threo-isocitrate + NAD(+) = 2-oxoglutarate + CO2 + NADH. The heterotetramer and the heterodimer composed of IDH3A and IDH3G subunits can be allosterically activated by citrate (CIT) or/and ADP, and the two activators can act independently or synergistically. The heterodimer composed of IDH3A and IDH3B subunits cannot be allosterically regulated and the allosteric regulation of the heterotetramer is through the IDH3G subunit and not the IDH3B subunit. The IDH3G subunit contains the allosteric site which consists of a CIT-binding site and an ADP-binding site, and the binding of CIT and ADP causes conformational changes at the allosteric site which are transmitted to the active site in the catalytic subunit (IDH3A) through a cascade of conformational changes at the heterodimer interface, leading to stabilization of the isocitrate-binding at the active site and thus activation of the enzyme. ATP can activate the heterotetramer and the heterodimer composed of IDH3A and IDH3G subunits at low concentrations but inhibits their activities at high concentrations, whereas ATP exhibits only inhibitory effect on the heterodimer composed of IDH3A and IDH3B subunits. Catalytic subunit of the enzyme which catalyzes the decarboxylation of isocitrate (ICT) into alpha-ketoglutarate. The heterodimer composed of the alpha (IDH3A) and beta (IDH3B) subunits and the heterodimer composed of the alpha (IDH3A) and gamma (IDH3G) subunits, have considerable basal activity but the full activity of the heterotetramer (containing two subunits of IDH3A, one of IDH3B and one of IDH3G) requires the assembly and cooperative function of both heterodimers. This Mesocricetus auratus (Golden hamster) protein is Isocitrate dehydrogenase [NAD] subunit alpha, mitochondrial.